The following is a 407-amino-acid chain: Na(+)-translocating NADH-quinone reductase subunit F (407 aa).

The helical transmembrane segment at 3–23 threads the bilayer; that stretch reads IILGVVMFTLIVLALTVMILF. The 95-residue stretch at 32 to 126 folds into the 2Fe-2S ferredoxin-type domain; sequence GDITVEINED…NLKIELPEEI (95 aa). [2Fe-2S] cluster is bound by residues Cys69, Cys75, Cys78, and Cys110. An FAD-binding FR-type domain is found at 129-269; the sequence is VKKWTCEVIS…SGPFGEFFAK (141 aa).

It belongs to the NqrF family. Composed of six subunits; NqrA, NqrB, NqrC, NqrD, NqrE and NqrF. Requires [2Fe-2S] cluster as cofactor. It depends on FAD as a cofactor.

It is found in the cell inner membrane. The enzyme catalyses a ubiquinone + n Na(+)(in) + NADH + H(+) = a ubiquinol + n Na(+)(out) + NAD(+). Functionally, NQR complex catalyzes the reduction of ubiquinone-1 to ubiquinol by two successive reactions, coupled with the transport of Na(+) ions from the cytoplasm to the periplasm. The first step is catalyzed by NqrF, which accepts electrons from NADH and reduces ubiquinone-1 to ubisemiquinone by a one-electron transfer pathway. This is Na(+)-translocating NADH-quinone reductase subunit F from Yersinia pseudotuberculosis serotype O:1b (strain IP 31758).